A 457-amino-acid chain; its full sequence is Argininosuccinate lyase (457 aa).

It belongs to the lyase 1 family. Argininosuccinate lyase subfamily.

It localises to the cytoplasm. It catalyses the reaction 2-(N(omega)-L-arginino)succinate = fumarate + L-arginine. It participates in amino-acid biosynthesis; L-arginine biosynthesis; L-arginine from L-ornithine and carbamoyl phosphate: step 3/3. The protein is Argininosuccinate lyase of Shewanella sediminis (strain HAW-EB3).